Reading from the N-terminus, the 476-residue chain is WASH complex subunit 1 (476 aa).

The required for WASH complex assembly stretch occupies residues 1–54 (MTTVAQKHFLEGQTYSVPLIQPDLRREEAVQQVADALQYLQKVSGDIFNRISQR). Disordered regions lie at residues 273–412 (SAPS…QGGD) and 427–476 (GISG…DWES). The segment covering 284–296 (TFSTESVEPSQAD) has biased composition (polar residues). The segment covering 302–333 (LLPPPPPPPPPPPPVMPTTVPPPPPLPQPTAP) has biased composition (pro residues). A VCA region spans residues 354–476 (QGAPKEVVNP…GEEDEDDWES (123 aa)). One can recognise a WH2 domain in the interval 366-388 (GRASLLESIRQAGGIGKANLRSV). A compositionally biased stretch (basic and acidic residues) spans 387–403 (SVKERKLEKKKQKEQEQ). Residues 467–476 (GEEDEDDWES) show a composition bias toward acidic residues.

This sequence belongs to the WASH1 family. As to quaternary structure, component of the WASH complex.

It localises to the early endosome membrane. Its subcellular location is the recycling endosome membrane. Acts as a nucleation-promoting factor at the surface of endosomes, where it recruits and activates the Arp2/3 complex to induce actin polymerization, playing a key role in the fission of tubules that serve as transport intermediates during endosome sorting. The sequence is that of WASH complex subunit 1 from Gallus gallus (Chicken).